A 150-amino-acid polypeptide reads, in one-letter code: Macrodomain Ter protein (150 aa).

The protein belongs to the MatP family. Homodimer.

Its subcellular location is the cytoplasm. Its function is as follows. Required for spatial organization of the terminus region of the chromosome (Ter macrodomain) during the cell cycle. Prevents early segregation of duplicated Ter macrodomains during cell division. Binds specifically to matS, which is a 13 bp signature motif repeated within the Ter macrodomain. In Klebsiella pneumoniae (strain 342), this protein is Macrodomain Ter protein.